A 339-amino-acid polypeptide reads, in one-letter code: Fructose-1,6-bisphosphatase class 1 (339 aa).

Mg(2+) contacts are provided by glutamate 91, aspartate 113, leucine 115, and aspartate 116. Substrate contacts are provided by residues 116–119, asparagine 208, and lysine 274; that span reads DGSS. Glutamate 280 contacts Mg(2+).

The protein belongs to the FBPase class 1 family. As to quaternary structure, homotetramer. The cofactor is Mg(2+).

Its subcellular location is the cytoplasm. The enzyme catalyses beta-D-fructose 1,6-bisphosphate + H2O = beta-D-fructose 6-phosphate + phosphate. The protein operates within carbohydrate biosynthesis; gluconeogenesis. The sequence is that of Fructose-1,6-bisphosphatase class 1 from Cupriavidus pinatubonensis (strain JMP 134 / LMG 1197) (Cupriavidus necator (strain JMP 134)).